Reading from the N-terminus, the 471-residue chain is Serine hydroxymethyltransferase 4 (471 aa).

An N-acetylmethionine modification is found at Met1. Residue Ser39 participates in L-serine binding. 3 residues coordinate pemetrexed: Ser39, Tyr59, and Glu61. L-serine contacts are provided by Glu61 and Tyr69. Pemetrexed contacts are provided by residues 105-107 (SGS), His134, Ser190, and His218. 2 residues coordinate L-serine: His218 and Lys244. The residue at position 244 (Lys244) is an N6-(pyridoxal phosphate)lysine. Gly290 is a pemetrexed binding site. Lys373 is a binding site for methotrexate. Arg389 contacts L-serine. Arg389 contributes to the pemetrexed binding site.

The protein belongs to the SHMT family. In terms of assembly, homotetramer. Interacts with UBP16. It depends on pyridoxal 5'-phosphate as a cofactor. As to expression, mostly expressed in flowers, less abundant in roots, inflorescence stems, and siliques, and barely detectable in leaves.

It localises to the cytoplasm. It carries out the reaction (6R)-5,10-methylene-5,6,7,8-tetrahydrofolate + glycine + H2O = (6S)-5,6,7,8-tetrahydrofolate + L-serine. Its pathway is one-carbon metabolism; tetrahydrofolate interconversion. Inhibited by the antifolate drugs methotrexate and pemetrexed. Catalyzes the interconversion of serine and glycine with the conversion of tetrahydrofolate (THF) into 5,10-methylene-THF. The polypeptide is Serine hydroxymethyltransferase 4 (Arabidopsis thaliana (Mouse-ear cress)).